Reading from the N-terminus, the 428-residue chain is Zinc-type alcohol dehydrogenase B (428 aa).

Zn(2+) contacts are provided by cysteine 116, histidine 137, cysteine 167, cysteine 170, cysteine 173, and cysteine 181. Lysine 393 carries the N6-benzoyllysine modification.

The protein belongs to the zinc-containing alcohol dehydrogenase family. Class-III subfamily. In terms of assembly, homodimer. Zn(2+) serves as cofactor. Post-translationally, benzoylation at lys-393 by gcnE leads to the activation od adhB.

It catalyses the reaction a primary alcohol + NAD(+) = an aldehyde + NADH + H(+). It carries out the reaction a secondary alcohol + NAD(+) = a ketone + NADH + H(+). Its function is as follows. Zinc-type alcohol dehydrogenase involved in development, secondary metabolism, pathogenicity, and stress response. Specifically controls the formation of sclerotia and the biosynthesis of aflatoxin. Contribute to seed colonization of A flavus on host maize seed. In Aspergillus flavus (strain ATCC 200026 / FGSC A1120 / IAM 13836 / NRRL 3357 / JCM 12722 / SRRC 167), this protein is Zinc-type alcohol dehydrogenase B.